The chain runs to 377 residues: MAKRDYYQVLGVAKNASDDEIKKAYRKLAMKHHPDRNPGNKDAEEHFKEAKEAYEMLSDSQKRAAYDQYGHAGVDPNMAGAGAQGFGGFADAFGDIFGDIFGQAAAGGRGGRSGPQVYRGADLRYSMEITLEQAAHGYDTQIRVPSWVSCEICHGSGAKPGTKPETCPTCNGSGAVRMSQGFFSIQQTCPKCHGTGTYIPEPCTHCHGAGKTKETKTLEVKIPAGIDDGMRIRSAGNGEPGINGGPSGDLYVEIHIKAHAVFERDGDDLHCQMPIPFTKAALGGEIEVPTLAGRATFTVPEGTQSGKTFRLRGKGIKGLRSSIAGDLYVHVQVETPVKLTDAQRDLLQQFEKSLVEGGARHSPQSKSWFDRVKSFFD.

Residues 5–70 (DYYQVLGVAK…QKRAAYDQYG (66 aa)) form the J domain. The segment at 137–215 (GYDTQIRVPS…CHGAGKTKET (79 aa)) adopts a CR-type zinc-finger fold. 8 residues coordinate Zn(2+): Cys-150, Cys-153, Cys-167, Cys-170, Cys-189, Cys-192, Cys-203, and Cys-206. CXXCXGXG motif repeat units follow at residues 150-157 (CEICHGSG), 167-174 (CPTCNGSG), 189-196 (CPKCHGTG), and 203-210 (CTHCHGAG).

This sequence belongs to the DnaJ family. Homodimer. Zn(2+) serves as cofactor.

The protein resides in the cytoplasm. In terms of biological role, participates actively in the response to hyperosmotic and heat shock by preventing the aggregation of stress-denatured proteins and by disaggregating proteins, also in an autonomous, DnaK-independent fashion. Unfolded proteins bind initially to DnaJ; upon interaction with the DnaJ-bound protein, DnaK hydrolyzes its bound ATP, resulting in the formation of a stable complex. GrpE releases ADP from DnaK; ATP binding to DnaK triggers the release of the substrate protein, thus completing the reaction cycle. Several rounds of ATP-dependent interactions between DnaJ, DnaK and GrpE are required for fully efficient folding. Also involved, together with DnaK and GrpE, in the DNA replication of plasmids through activation of initiation proteins. In Paraburkholderia phymatum (strain DSM 17167 / CIP 108236 / LMG 21445 / STM815) (Burkholderia phymatum), this protein is Chaperone protein DnaJ.